The following is a 534-amino-acid chain: Probable alpha-galactosidase A (534 aa).

A signal peptide spans 1-25 (MRLITRWIPLANALASTMPVQVVAS). C47 and C79 form a disulfide bridge. N-linked (GlcNAc...) asparagine glycosylation is found at N50, N88, N94, and N124. C127 and C157 form a disulfide bridge. Catalysis depends on D155, which acts as the Nucleophile. Residue N204 is glycosylated (N-linked (GlcNAc...) asparagine). D213 (proton donor) is an active-site residue. The region spanning 413–534 (CSQVIPTGLI…GLPAGVHVAL (122 aa)) is the Ricin B-type lectin domain. C430 and C443 are oxidised to a cystine. Residue N444 is glycosylated (N-linked (GlcNAc...) asparagine). A disulfide bond links C468 and C481.

The protein belongs to the glycosyl hydrolase 27 family.

Its subcellular location is the secreted. It carries out the reaction Hydrolysis of terminal, non-reducing alpha-D-galactose residues in alpha-D-galactosides, including galactose oligosaccharides, galactomannans and galactolipids.. Its function is as follows. Hydrolyzes a variety of simple alpha-D-galactoside as well as more complex molecules such as oligosaccharides and polysaccharides. This is Probable alpha-galactosidase A (aglA) from Aspergillus flavus (strain ATCC 200026 / FGSC A1120 / IAM 13836 / NRRL 3357 / JCM 12722 / SRRC 167).